A 338-amino-acid chain; its full sequence is DNA-directed RNA polymerase subunit alpha (338 aa).

Residues 1 to 234 (MIQKNWQELI…DQLEIFVNFE (234 aa)) form an alpha N-terminal domain (alpha-NTD) region. Positions 250-338 (FSPALLKKVD…ELAKRFEEHY (89 aa)) are alpha C-terminal domain (alpha-CTD).

Belongs to the RNA polymerase alpha chain family. In terms of assembly, homodimer. The RNAP catalytic core consists of 2 alpha, 1 beta, 1 beta' and 1 omega subunit. When a sigma factor is associated with the core the holoenzyme is formed, which can initiate transcription.

The enzyme catalyses RNA(n) + a ribonucleoside 5'-triphosphate = RNA(n+1) + diphosphate. In terms of biological role, DNA-dependent RNA polymerase catalyzes the transcription of DNA into RNA using the four ribonucleoside triphosphates as substrates. The chain is DNA-directed RNA polymerase subunit alpha from Xanthobacter autotrophicus (strain ATCC BAA-1158 / Py2).